A 673-amino-acid chain; its full sequence is DNA ligase (673 aa).

NAD(+) contacts are provided by residues 33–37 (DYEYD), 82–83 (SL), and Glu-113. The N6-AMP-lysine intermediate role is filled by Lys-115. Residues Arg-136, Glu-170, Lys-285, and Lys-309 each coordinate NAD(+). Positions 403, 406, 421, and 426 each coordinate Zn(2+). The 90-residue stretch at 583–672 (AKSDILKGYT…SREEAEKILM (90 aa)) folds into the BRCT domain.

Belongs to the NAD-dependent DNA ligase family. LigA subfamily. It depends on Mg(2+) as a cofactor. Mn(2+) serves as cofactor.

It carries out the reaction NAD(+) + (deoxyribonucleotide)n-3'-hydroxyl + 5'-phospho-(deoxyribonucleotide)m = (deoxyribonucleotide)n+m + AMP + beta-nicotinamide D-nucleotide.. Functionally, DNA ligase that catalyzes the formation of phosphodiester linkages between 5'-phosphoryl and 3'-hydroxyl groups in double-stranded DNA using NAD as a coenzyme and as the energy source for the reaction. It is essential for DNA replication and repair of damaged DNA. In Caldicellulosiruptor bescii (strain ATCC BAA-1888 / DSM 6725 / KCTC 15123 / Z-1320) (Anaerocellum thermophilum), this protein is DNA ligase.